A 383-amino-acid chain; its full sequence is Deoxyguanosinetriphosphate triphosphohydrolase-like protein (383 aa).

The HD domain maps to 62 to 198; it reads RLTHSLEVST…ASLADDISYI (137 aa).

The protein belongs to the dGTPase family. Type 2 subfamily.

This is Deoxyguanosinetriphosphate triphosphohydrolase-like protein from Rickettsia prowazekii (strain Madrid E).